Reading from the N-terminus, the 211-residue chain is Small ribosomal subunit protein uS3 (211 aa).

Positions 39–107 (VTKYVESSFA…VPSLNVVEVK (69 aa)) constitute a KH type-2 domain.

It belongs to the universal ribosomal protein uS3 family. Part of the 30S ribosomal subunit. Forms a tight complex with proteins S10 and S14.

Its function is as follows. Binds the lower part of the 30S subunit head. Binds mRNA in the 70S ribosome, positioning it for translation. This is Small ribosomal subunit protein uS3 from Neorickettsia sennetsu (strain ATCC VR-367 / Miyayama) (Ehrlichia sennetsu).